The sequence spans 252 residues: Thiazole synthase (252 aa).

Catalysis depends on Lys-91, which acts as the Schiff-base intermediate with DXP. 1-deoxy-D-xylulose 5-phosphate is bound by residues Gly-152, 179–180, and 201–202; these read AG and NT.

It belongs to the ThiG family. As to quaternary structure, homotetramer. Forms heterodimers with either ThiH or ThiS.

It is found in the cytoplasm. It catalyses the reaction [ThiS sulfur-carrier protein]-C-terminal-Gly-aminoethanethioate + 2-iminoacetate + 1-deoxy-D-xylulose 5-phosphate = [ThiS sulfur-carrier protein]-C-terminal Gly-Gly + 2-[(2R,5Z)-2-carboxy-4-methylthiazol-5(2H)-ylidene]ethyl phosphate + 2 H2O + H(+). Its pathway is cofactor biosynthesis; thiamine diphosphate biosynthesis. Its function is as follows. Catalyzes the rearrangement of 1-deoxy-D-xylulose 5-phosphate (DXP) to produce the thiazole phosphate moiety of thiamine. Sulfur is provided by the thiocarboxylate moiety of the carrier protein ThiS. In vitro, sulfur can be provided by H(2)S. This is Thiazole synthase from Erwinia amylovora (Fire blight bacteria).